The sequence spans 1434 residues: Pleiotropic drug resistance protein 1 (1434 aa).

The disordered stretch occupies residues 1-22 (MEPANLSNLRGSSLRGSTRGSL). The ABC transporter 1 domain occupies 161 to 434 (LNSLHILSSR…FESMGFKCPQ (274 aa)). 194-201 (GPPSSGKT) contacts ATP. Positions 512–725 (ELLKVCTERE…SVNSILVNEF (214 aa)) constitute an ABC transmembrane type-2 1 domain. 7 helical membrane-spanning segments follow: residues 530–550 (FVYMFKFSQLTIMALITMTLF), 563–583 (GGIYAGALFFVVIMIMFNGMS), 618–638 (IPVTLVEVGLWVILTYYVIGF), 649–669 (FLLLIVVNQMASGMFRFIGAV), 675–695 (VASTFGSFALLLQFALGGFVL), 702–722 (SWWIWGYWISPMMYSVNSILV), and 760–780 (IGVGALVGFTVVFNFCYSLAL). The disordered stretch occupies residues 793–824 (LPEDGENAENGEVSSQITSTDGGDSISESQNN). Polar residues predominate over residues 804-824 (EVSSQITSTDGGDSISESQNN). The ABC transporter 2 domain maps to 837 to 1089 (ITFDDVVYSV…HLIKYFESNP (253 aa)). An ATP-binding site is contributed by 882–889 (GVSGAGKT). In terms of domain architecture, ABC transmembrane type-2 2 spans 1162 to 1376 (TQCVACLWKQ…TLYGLVASQF (215 aa)). The next 7 membrane-spanning stretches (helical) occupy residues 1181-1201 (YTAVRFIFTTFIALIFGTMFW), 1221-1241 (YAAVLFLGVQNASSVQPVVAI), 1269-1289 (IPYIFVQSVFYGIIVYAMIGF), 1296-1316 (FFWYLFIMFFTLLYFTFYGMM), 1326-1346 (VASIVAAFFYGVWNLFSGFII), 1357-1377 (WYYWANPVAWTLYGLVASQFG), and 1406-1426 (VVAAVLTAYVFMFAFTFAFAI).

Belongs to the ABC transporter superfamily. ABCG family. PDR (TC 3.A.1.205) subfamily.

The protein localises to the membrane. Functionally, may be a general defense protein. This chain is Pleiotropic drug resistance protein 1 (PDR1), found in Nicotiana tabacum (Common tobacco).